The following is a 213-amino-acid chain: Uridine kinase (213 aa).

15–22 (GASASGKS) is an ATP binding site.

Belongs to the uridine kinase family.

It is found in the cytoplasm. The enzyme catalyses uridine + ATP = UMP + ADP + H(+). The catalysed reaction is cytidine + ATP = CMP + ADP + H(+). It functions in the pathway pyrimidine metabolism; CTP biosynthesis via salvage pathway; CTP from cytidine: step 1/3. It participates in pyrimidine metabolism; UMP biosynthesis via salvage pathway; UMP from uridine: step 1/1. The protein is Uridine kinase of Pectobacterium atrosepticum (strain SCRI 1043 / ATCC BAA-672) (Erwinia carotovora subsp. atroseptica).